The chain runs to 685 residues: DNA-directed RNA polymerase subunit beta' (685 aa).

Cys69, Cys71, Cys87, and Cys90 together coordinate Zn(2+). Mg(2+)-binding residues include Asp492, Asp494, and Asp496.

Belongs to the RNA polymerase beta' chain family. RpoC1 subfamily. In plastids the minimal PEP RNA polymerase catalytic core is composed of four subunits: alpha, beta, beta', and beta''. When a (nuclear-encoded) sigma factor is associated with the core the holoenzyme is formed, which can initiate transcription. Requires Mg(2+) as cofactor. Zn(2+) serves as cofactor.

It is found in the plastid. It localises to the chloroplast. It catalyses the reaction RNA(n) + a ribonucleoside 5'-triphosphate = RNA(n+1) + diphosphate. Functionally, DNA-dependent RNA polymerase catalyzes the transcription of DNA into RNA using the four ribonucleoside triphosphates as substrates. The sequence is that of DNA-directed RNA polymerase subunit beta' from Dioscorea elephantipes (Elephant's foot yam).